Reading from the N-terminus, the 819-residue chain is Leucine--tRNA ligase (819 aa).

The 'HIGH' region signature appears at 42–52 (PYPSGRLHMGH). Positions 577–581 (KMSKS) match the 'KMSKS' region motif. Lys580 is an ATP binding site.

The protein belongs to the class-I aminoacyl-tRNA synthetase family.

It localises to the cytoplasm. The enzyme catalyses tRNA(Leu) + L-leucine + ATP = L-leucyl-tRNA(Leu) + AMP + diphosphate. This chain is Leucine--tRNA ligase, found in Saccharophagus degradans (strain 2-40 / ATCC 43961 / DSM 17024).